The primary structure comprises 480 residues: Bifunctional pantoate ligase/cytidylate kinase (480 aa).

The interval 1-243 (MPTMGGLHQG…CGTTRLIDHV (243 aa)) is pantoate--beta-alanine ligase. An ATP-binding site is contributed by 4–11 (MGGLHQGH). The active-site Proton donor is the His11. Gln34 is a (R)-pantoate binding site. A beta-alanine-binding site is contributed by Gln34. 123–126 (GEKD) contacts ATP. Gln129 is a (R)-pantoate binding site. Residues Val152 and 160-163 (LSSR) each bind ATP. The interval 244-480 (FLMTRQPLVA…GEEAWPTPAG (237 aa)) is cytidylate kinase.

This sequence in the N-terminal section; belongs to the pantothenate synthetase family. The protein in the C-terminal section; belongs to the cytidylate kinase family. Type 1 subfamily.

The protein resides in the cytoplasm. The enzyme catalyses (R)-pantoate + beta-alanine + ATP = (R)-pantothenate + AMP + diphosphate + H(+). It carries out the reaction CMP + ATP = CDP + ADP. It catalyses the reaction dCMP + ATP = dCDP + ADP. Its pathway is cofactor biosynthesis; (R)-pantothenate biosynthesis; (R)-pantothenate from (R)-pantoate and beta-alanine: step 1/1. Catalyzes the condensation of pantoate with beta-alanine in an ATP-dependent reaction via a pantoyl-adenylate intermediate. In terms of biological role, catalyzes the transfer of a phosphate group from ATP to either CMP or dCMP to form CDP or dCDP and ADP, respectively. This Synechococcus sp. (strain CC9605) protein is Bifunctional pantoate ligase/cytidylate kinase.